The following is a 118-amino-acid chain: Autophagy-related protein 8 (118 aa).

A lipid anchor (Phosphatidylethanolamine amidated glycine) is attached at Gly116. Positions 117-118 are cleaved as a propeptide — removed in mature form; it reads EA.

The protein belongs to the ATG8 family. As to quaternary structure, conjugation to phosphatidylethanolamine (PE) leads to homodimerization. Interacts with ATG1, ATG3, ATG4, ATG7 and ATG12. Post-translationally, the C-terminal Glu-117 and Ala-118 residues of ATG8 are removed by ATG4 to expose Gly-116 at the C-terminus. This Gly-116 forms then a thioester bond with the 'Cys-550' of ATG7 (E1-like activating enzyme) before being transferred to the 'Cys-244' of ATG3 (the specific E2 conjugating enzyme), in order to be finally amidated with phosphatidylethanolamine. This lipid modification anchors ATG8 to membranes and can be reversed by ATG4, releasing soluble ATG8.

Its subcellular location is the cytoplasmic vesicle. The protein resides in the cvt vesicle membrane. It is found in the autophagosome membrane. The protein localises to the vacuole membrane. In terms of biological role, ubiquitin-like modifier involved in cytoplasm to vacuole transport (Cvt) vesicles and autophagosome formation. With ATG4, mediates the delivery of the vesicles and autophagosomes to the vacuole via the microtubule cytoskeleton. Required for selective autophagic degradation of the nucleus (nucleophagy) as well as for mitophagy which contributes to regulate mitochondrial quantity and quality by eliminating the mitochondria to a basal level to fulfill cellular energy requirements and preventing excess ROS production. Also participates in membrane fusion events that take place in the early secretory pathway. Also involved in endoplasmic reticulum-specific autophagic process and is essential for the survival of cells subjected to severe ER stress. The ATG8-PE conjugate mediates tethering between adjacent membranes and stimulates membrane hemifusion, leading to expansion of the autophagosomal membrane during autophagy. Moreover not only conjugation, but also subsequent ATG8-PE deconjugation is an important step required to facilitate multiple events during macroautophagy, and especially for efficient autophagosome biogenesis, the assembly of ATG9-containing tubulovesicular clusters into phagophores/autophagosomes, and for the disassembly of PAS-associated ATG components. Autophagy is required for proper vegetative growth, asexual/sexual reproduction, and full virulence. Autophagy is particularly involved in the biosynthesis of deoxynivalenol (DON), an important virulence determinant. The chain is Autophagy-related protein 8 from Gibberella zeae (strain ATCC MYA-4620 / CBS 123657 / FGSC 9075 / NRRL 31084 / PH-1) (Wheat head blight fungus).